The sequence spans 74 residues: Sec-independent protein translocase protein TatA (74 aa).

The helical transmembrane segment at 1–21 threads the bilayer; sequence MGSIGMTELLLIFGIIVLLFG.

This sequence belongs to the TatA/E family. In terms of assembly, forms a complex with TatC.

It is found in the cell inner membrane. Its function is as follows. Part of the twin-arginine translocation (Tat) system that transports large folded proteins containing a characteristic twin-arginine motif in their signal peptide across membranes. TatA could form the protein-conducting channel of the Tat system. In Sulfurihydrogenibium sp. (strain YO3AOP1), this protein is Sec-independent protein translocase protein TatA.